Reading from the N-terminus, the 426-residue chain is UPF0597 protein CLB_1750 (426 aa).

It belongs to the UPF0597 family.

The protein is UPF0597 protein CLB_1750 of Clostridium botulinum (strain ATCC 19397 / Type A).